The chain runs to 78 residues: Translation initiation factor IF-1 (78 aa).

An S1-like domain is found at 2-78; that stretch reads SKNNLNETES…TQARITYRFK (77 aa).

This sequence belongs to the IF-1 family. As to quaternary structure, component of the 30S ribosomal translation pre-initiation complex which assembles on the 30S ribosome in the order IF-2 and IF-3, IF-1 and N-formylmethionyl-tRNA(fMet); mRNA recruitment can occur at any time during PIC assembly.

It localises to the cytoplasm. One of the essential components for the initiation of protein synthesis. Stabilizes the binding of IF-2 and IF-3 on the 30S subunit to which N-formylmethionyl-tRNA(fMet) subsequently binds. Helps modulate mRNA selection, yielding the 30S pre-initiation complex (PIC). Upon addition of the 50S ribosomal subunit IF-1, IF-2 and IF-3 are released leaving the mature 70S translation initiation complex. The polypeptide is Translation initiation factor IF-1 (Aster yellows witches'-broom phytoplasma (strain AYWB)).